A 143-amino-acid chain; its full sequence is Small ribosomal subunit protein uS11c (143 aa).

This sequence belongs to the universal ribosomal protein uS11 family. As to quaternary structure, part of the 30S ribosomal subunit.

The protein localises to the plastid. It is found in the chloroplast. The polypeptide is Small ribosomal subunit protein uS11c (Oryza nivara (Indian wild rice)).